Reading from the N-terminus, the 522-residue chain is Golgin subfamily A member 6-like protein 10 (522 aa).

A compositionally biased stretch (pro residues) spans 1–11 (MWPQPRLPPHP). Residues 1-77 (MWPQPRLPPH…DSATGIYGEG (77 aa)) form a disordered region. The segment covering 51 to 62 (NGSSPDTATSGG) has biased composition (polar residues). Residues 157–328 (SKVEQLQDET…RLCEQEKLPG (172 aa)) adopt a coiled-coil conformation. Positions 439–452 (KELEKSGGAEEPRG) are enriched in basic and acidic residues. The tract at residues 439 to 503 (KELEKSGGAE…TGEAAGGAEE (65 aa)) is disordered. Low complexity-rich tracts occupy residues 456–471 (AAAARPVPGAPVPQGA) and 489–503 (GEAVGTGEAAGGAEE).

This sequence belongs to the GOLGA6 family.

The polypeptide is Golgin subfamily A member 6-like protein 10 (Homo sapiens (Human)).